The primary structure comprises 175 residues: Apoptosis regulatory protein Siva (175 aa).

A Phosphotyrosine; by ABL2 modification is found at Y34. Positions 36 to 55 (QEVFEKTKRLLFLGAQAYLD) are interaction with BCL2L1 isoform Bcl-x(L) and inhibition of BCL2L1 anti-apoptotic activity. A Phosphoserine modification is found at S70. Residues 105–123 (DPSGVASIACSSCVRAVDG) are interaction with coxsackievirus B3 VP2.

In terms of assembly, binds through its N-terminal region to the C-terminus of CD27 and to PXMP2/PMP22. Binds to the C-terminus of TNFRSF18/GITR. Isoform 1 binds to BCL2L1/BCLX isoform Bcl-x(L) but not to BAX. As to quaternary structure, (Microbial infection) Interacts with coxsackievirus B3 capsid protein VP2; this interaction inhibits the binding of SIVA1 to CD27. Zn(2+) is required as a cofactor. Post-translationally, phosphorylated by ABL2/ARG in response to oxidative stress. As to expression, ubiquitous. Mostly expressed in thymus, testis, ovary, prostate, small intestine and spleen and less in colon.

It localises to the cytoplasm. Its subcellular location is the nucleus. In terms of biological role, induces CD27-mediated apoptosis. Inhibits BCL2L1 isoform Bcl-x(L) anti-apoptotic activity. Inhibits activation of NF-kappa-B and promotes T-cell receptor-mediated apoptosis. This Homo sapiens (Human) protein is Apoptosis regulatory protein Siva (SIVA1).